The chain runs to 185 residues: Ribosome-recycling factor (185 aa).

Belongs to the RRF family.

It is found in the cytoplasm. Its function is as follows. Responsible for the release of ribosomes from messenger RNA at the termination of protein biosynthesis. May increase the efficiency of translation by recycling ribosomes from one round of translation to another. This chain is Ribosome-recycling factor, found in Nitrosomonas europaea (strain ATCC 19718 / CIP 103999 / KCTC 2705 / NBRC 14298).